Consider the following 392-residue polypeptide: O-phospho-L-seryl-tRNA:Cys-tRNA synthase 2 (392 aa).

Residues Ala85–Arg86, Asn190, and Ser213–His215 each bind pyridoxal 5'-phosphate. Lys216 carries the N6-(pyridoxal phosphate)lysine modification.

Belongs to the SepCysS family. As to quaternary structure, homodimer. Interacts with SepRS. It depends on pyridoxal 5'-phosphate as a cofactor.

It catalyses the reaction O-phospho-L-seryl-tRNA(Cys) + hydrogen sulfide + H(+) = L-cysteinyl-tRNA(Cys) + phosphate. Converts O-phospho-L-seryl-tRNA(Cys) (Sep-tRNA(Cys)) to L-cysteinyl-tRNA(Cys) (Cys-tRNA(Cys)). The polypeptide is O-phospho-L-seryl-tRNA:Cys-tRNA synthase 2 (Methanocorpusculum labreanum (strain ATCC 43576 / DSM 4855 / Z)).